Consider the following 179-residue polypeptide: Large ribosomal subunit protein uL6 (179 aa).

It belongs to the universal ribosomal protein uL6 family. In terms of assembly, part of the 50S ribosomal subunit.

Functionally, this protein binds to the 23S rRNA, and is important in its secondary structure. It is located near the subunit interface in the base of the L7/L12 stalk, and near the tRNA binding site of the peptidyltransferase center. The sequence is that of Large ribosomal subunit protein uL6 from Streptomyces avermitilis (strain ATCC 31267 / DSM 46492 / JCM 5070 / NBRC 14893 / NCIMB 12804 / NRRL 8165 / MA-4680).